The following is a 146-amino-acid chain: [Ribosomal protein bS18]-alanine N-acetyltransferase (146 aa).

An N-acetyltransferase domain is found at 2–146; sequence SIISQIEACD…ENAVVMACYL (145 aa). 69–71 serves as a coordination point for acetyl-CoA; sequence IAI. The active-site Proton acceptor is Glu-103. Asn-108 lines the acetyl-CoA pocket. Catalysis depends on Tyr-114, which acts as the Proton donor.

This sequence belongs to the acetyltransferase family. RimI subfamily.

It is found in the cytoplasm. It carries out the reaction N-terminal L-alanyl-[ribosomal protein bS18] + acetyl-CoA = N-terminal N(alpha)-acetyl-L-alanyl-[ribosomal protein bS18] + CoA + H(+). Acetylates the N-terminal alanine of ribosomal protein bS18. This Haemophilus influenzae (strain ATCC 51907 / DSM 11121 / KW20 / Rd) protein is [Ribosomal protein bS18]-alanine N-acetyltransferase.